A 510-amino-acid polypeptide reads, in one-letter code: NAD(P)H-quinone oxidoreductase subunit 2 A, chloroplastic (510 aa).

13 helical membrane-spanning segments follow: residues 24 to 44 (LLLF…GLIL), 57 to 77 (IPWL…ALLF), 99 to 119 (IFQF…VEYI), 124 to 144 (MAIT…MFLC), 149 to 169 (LITI…LSGY), 183 to 203 (YLLM…WLYG), 227 to 247 (PGIS…LSPA), 295 to 315 (WHLL…LIAI), 323 to 343 (MLAY…IVGD), 347 to 367 (GYAS…GTFA), 395 to 415 (ALSS…AGFF), 418 to 438 (LHLF…IGLL), and 484 to 504 (MIVC…IIAI).

The protein belongs to the complex I subunit 2 family. In terms of assembly, NDH is composed of at least 16 different subunits, 5 of which are encoded in the nucleus.

It is found in the plastid. The protein localises to the chloroplast thylakoid membrane. The catalysed reaction is a plastoquinone + NADH + (n+1) H(+)(in) = a plastoquinol + NAD(+) + n H(+)(out). The enzyme catalyses a plastoquinone + NADPH + (n+1) H(+)(in) = a plastoquinol + NADP(+) + n H(+)(out). Its function is as follows. NDH shuttles electrons from NAD(P)H:plastoquinone, via FMN and iron-sulfur (Fe-S) centers, to quinones in the photosynthetic chain and possibly in a chloroplast respiratory chain. The immediate electron acceptor for the enzyme in this species is believed to be plastoquinone. Couples the redox reaction to proton translocation, and thus conserves the redox energy in a proton gradient. The sequence is that of NAD(P)H-quinone oxidoreductase subunit 2 A, chloroplastic from Platanus occidentalis (Sycamore).